We begin with the raw amino-acid sequence, 144 residues long: Nucleoside diphosphate kinase (144 aa).

Positions 11, 59, 87, 93, 104, and 114 each coordinate ATP. Histidine 117 serves as the catalytic Pros-phosphohistidine intermediate.

Belongs to the NDK family. As to quaternary structure, homotetramer. The cofactor is Mg(2+).

Its subcellular location is the cytoplasm. The enzyme catalyses a 2'-deoxyribonucleoside 5'-diphosphate + ATP = a 2'-deoxyribonucleoside 5'-triphosphate + ADP. The catalysed reaction is a ribonucleoside 5'-diphosphate + ATP = a ribonucleoside 5'-triphosphate + ADP. Functionally, major role in the synthesis of nucleoside triphosphates other than ATP. The ATP gamma phosphate is transferred to the NDP beta phosphate via a ping-pong mechanism, using a phosphorylated active-site intermediate. This chain is Nucleoside diphosphate kinase, found in Coxiella burnetii (strain CbuG_Q212) (Coxiella burnetii (strain Q212)).